The primary structure comprises 1191 residues: Roquin-2 (1191 aa).

Zn(2+) contacts are provided by Cys14, Cys17, Cys33, His35, Cys38, Cys50, and Asp53. An RING-type; degenerate zinc finger spans residues 14 to 54 (CPICYNEFDENVHKPISLGCSHTVCKTCLNKLHRKACPFDQ). An HEPN-N region spans residues 91–170 (ENKHYEVAKK…RTVTELILQH (80 aa)). An ROQ region spans residues 171–325 (QNPQQLSANL…SIIDKLQSPE (155 aa)). The segment at 326–396 (SFAKSVQELT…GLVDFIQNYS (71 aa)) is HEPN-C. Residues 410-438 (KYKTSMCRDLRQQGGCPRGTNCTFAHSQE) form a C3H1-type zinc finger. 2 disordered regions span residues 528-576 (GANG…NSVP) and 644-680 (ESSL…PQPY). Polar residues predominate over residues 530–546 (NGQNAAGPSADSVTENK). Ser549 carries the post-translational modification Phosphoserine. Residues 554-576 (PVSNVAATSAGPSNVGTELNSVP) show a composition bias toward polar residues. 3 positions are modified to phosphoserine: Ser808, Ser983, and Ser1119.

In terms of assembly, interacts with EDC4. Interacts with CCR4-NOT deadenylase complex. Interacts with MAP3K5; the interaction is probably stimulus-dependent. In terms of processing, proteolytically cleaved after Arg-509 and Arg-585 by MALT1 in activated CD4(+) T cells; cleavage at Arg-509 and Arg-585 is critical for promoting RC3H1 degradation in response to T-cell receptor (TCR) stimulation, and hence is necessary for prolonging the stability of a set of mRNAs controlling Th17 cell differentiation. As to expression, expressed in spleen, testis, ovary and small intestine.

The protein resides in the cytoplasm. It localises to the P-body. It catalyses the reaction S-ubiquitinyl-[E2 ubiquitin-conjugating enzyme]-L-cysteine + [acceptor protein]-L-lysine = [E2 ubiquitin-conjugating enzyme]-L-cysteine + N(6)-ubiquitinyl-[acceptor protein]-L-lysine.. It functions in the pathway protein modification; protein ubiquitination. With respect to regulation, binding to dsRNA, but not CDE RNA, crosstalks with the E3 ubiquitin ligase activity and may inhibit ubiquitination. Its function is as follows. Post-transcriptional repressor of mRNAs containing a conserved stem loop motif, called constitutive decay element (CDE), which is often located in the 3'-UTR, as in HMGXB3, ICOS, IER3, NFKBID, NFKBIZ, PPP1R10, TNF and in many more mRNAs. Binds to CDE and promotes mRNA deadenylation and degradation. This process does not involve miRNAs. In follicular helper T (Tfh) cells, represses of ICOS and TNFRSF4 expression, thus preventing spontaneous Tfh cell differentiation, germinal center B-cell differentiation in the absence of immunization and autoimmunity. In resting or LPS-stimulated macrophages, controls inflammation by suppressing TNF expression. Also recognizes CDE in its own mRNA and in that of paralogous RC3H1, possibly leading to feedback loop regulation. miRNA-binding protein that regulates microRNA homeostasis. Enhances DICER-mediated processing of pre-MIR146a but reduces mature MIR146a levels through an increase of 3' end uridylation. Both inhibits ICOS mRNA expression and they may act together to exert the suppression. Acts as a ubiquitin E3 ligase. Pairs with E2 enzymes UBE2B, UBE2D2, UBE2E2, UBE2E3, UBE2G2, UBE2K and UBE2Q2 and produces polyubiquitin chains. Shows the strongest activity when paired with UBE2N:UBE2V1 or UBE2N:UBE2V2 E2 complexes and generate both short and long polyubiquitin chains. Involved in the ubiquitination of MAP3K5. Able to interact with double-stranded RNA (dsRNA). The sequence is that of Roquin-2 (RC3H2) from Homo sapiens (Human).